The chain runs to 296 residues: Acetylglutamate kinase (296 aa).

Substrate is bound by residues 69–70 (GG), Arg-91, and Asn-193.

This sequence belongs to the acetylglutamate kinase family. ArgB subfamily.

Its subcellular location is the cytoplasm. It carries out the reaction N-acetyl-L-glutamate + ATP = N-acetyl-L-glutamyl 5-phosphate + ADP. Its pathway is amino-acid biosynthesis; L-arginine biosynthesis; N(2)-acetyl-L-ornithine from L-glutamate: step 2/4. Its function is as follows. Catalyzes the ATP-dependent phosphorylation of N-acetyl-L-glutamate. The protein is Acetylglutamate kinase of Paracidovorax citrulli (strain AAC00-1) (Acidovorax citrulli).